A 356-amino-acid polypeptide reads, in one-letter code: Nuclear hormone receptor family member nhr-169 (356 aa).

Residues 16 to 90 constitute a DNA-binding region (nuclear receptor); that stretch reads DPICSVCNFS…AGMKRSLVKE (75 aa). 2 NR C4-type zinc fingers span residues 19-40 and 56-72; these read CSVC…CSAC and CKKD…CRAC. Positions 144-356 constitute an NR LBD domain; the sequence is DVSKILKTTP…KLYLHMGLPF (213 aa).

This sequence belongs to the nuclear hormone receptor family.

The protein resides in the nucleus. Orphan nuclear receptor. The chain is Nuclear hormone receptor family member nhr-169 (nhr-169) from Caenorhabditis elegans.